We begin with the raw amino-acid sequence, 149 residues long: Cytochrome c-type biogenesis protein CcmE (149 aa).

At 1-7 (MKARHKR) the chain is on the cytoplasmic side. Residues 8 to 28 (LGLIVAGLAALGLGAALVLSA) form a helical; Signal-anchor for type II membrane protein membrane-spanning segment. The Periplasmic segment spans residues 29-149 (FQKNLVFFFT…GAPALAGALK (121 aa)). Heme contacts are provided by H123 and Y127.

The protein belongs to the CcmE/CycJ family.

The protein resides in the cell inner membrane. In terms of biological role, heme chaperone required for the biogenesis of c-type cytochromes. Transiently binds heme delivered by CcmC and transfers the heme to apo-cytochromes in a process facilitated by CcmF and CcmH. This Polaromonas naphthalenivorans (strain CJ2) protein is Cytochrome c-type biogenesis protein CcmE.